The primary structure comprises 361 residues: D-alanine--D-alanine ligase (361 aa).

In terms of domain architecture, ATP-grasp spans 140 to 345 (KHLFAQAGLD…YAELIEKLVA (206 aa)). Residue 173–228 (EGELGYPCFVKPANLGSSVGISKCRSREELDQAFELAFQYDRKIVVEEGVIGREIE) coordinates ATP. Residues D299, E312, and N314 each coordinate Mg(2+).

It belongs to the D-alanine--D-alanine ligase family. Mg(2+) serves as cofactor. Mn(2+) is required as a cofactor.

It localises to the cytoplasm. The enzyme catalyses 2 D-alanine + ATP = D-alanyl-D-alanine + ADP + phosphate + H(+). Its pathway is cell wall biogenesis; peptidoglycan biosynthesis. In terms of biological role, cell wall formation. The polypeptide is D-alanine--D-alanine ligase (Bacillus licheniformis (strain ATCC 14580 / DSM 13 / JCM 2505 / CCUG 7422 / NBRC 12200 / NCIMB 9375 / NCTC 10341 / NRRL NRS-1264 / Gibson 46)).